A 151-amino-acid polypeptide reads, in one-letter code: Ubiquitin-conjugating enzyme E2 W (151 aa).

A UBC core domain is found at 3–151 (SMQKRLQKEL…TKWWYHDDTC (149 aa)). The active-site Glycyl thioester intermediate is Cys-91.

The protein belongs to the ubiquitin-conjugating enzyme family.

The protein localises to the nucleus. The enzyme catalyses S-ubiquitinyl-[E1 ubiquitin-activating enzyme]-L-cysteine + [E2 ubiquitin-conjugating enzyme]-L-cysteine = [E1 ubiquitin-activating enzyme]-L-cysteine + S-ubiquitinyl-[E2 ubiquitin-conjugating enzyme]-L-cysteine.. It carries out the reaction S-ubiquitinyl-[E1 ubiquitin-activating enzyme]-L-cysteine + [acceptor protein]-N-terminal-amino acid = [E1 ubiquitin-activating enzyme]-L-cysteine + N-terminal-ubiquitinyl-[acceptor protein].. Its pathway is protein modification; protein ubiquitination. Functionally, accepts ubiquitin from the E1 complex and catalyzes its covalent attachment to other proteins. Catalyzes monoubiquitination. Involved in degradation of misfolded chaperone substrate and DNA repair. The chain is Ubiquitin-conjugating enzyme E2 W (ube2w) from Xenopus tropicalis (Western clawed frog).